A 165-amino-acid polypeptide reads, in one-letter code: Cyclic pyranopterin monophosphate synthase (165 aa).

Residues 76 to 78 (LCH) and 114 to 115 (ME) each bind substrate. The active site involves Asp-129.

This sequence belongs to the MoaC family. As to quaternary structure, homohexamer; trimer of dimers.

It catalyses the reaction (8S)-3',8-cyclo-7,8-dihydroguanosine 5'-triphosphate = cyclic pyranopterin phosphate + diphosphate. Its pathway is cofactor biosynthesis; molybdopterin biosynthesis. Functionally, catalyzes the conversion of (8S)-3',8-cyclo-7,8-dihydroguanosine 5'-triphosphate to cyclic pyranopterin monophosphate (cPMP). The protein is Cyclic pyranopterin monophosphate synthase of Brucella abortus (strain 2308).